Reading from the N-terminus, the 541-residue chain is DNA ligase 1 (541 aa).

Residue Glu234 coordinates ATP. The active-site N6-AMP-lysine intermediate is Lys236. Positions 241, 256, 286, 325, 398, and 404 each coordinate ATP.

This sequence belongs to the ATP-dependent DNA ligase family. Mg(2+) is required as a cofactor.

The enzyme catalyses ATP + (deoxyribonucleotide)n-3'-hydroxyl + 5'-phospho-(deoxyribonucleotide)m = (deoxyribonucleotide)n+m + AMP + diphosphate.. Functionally, DNA ligase that seals nicks in double-stranded DNA during DNA replication, DNA recombination and DNA repair. In Korarchaeum cryptofilum (strain OPF8), this protein is DNA ligase 1.